A 506-amino-acid chain; its full sequence is Dual specificity protein kinase shkC (506 aa).

A disordered region spans residues 1 to 21 (MDSGLGSSYPEERSGPPEIRP). A compositionally biased stretch (basic and acidic residues) spans 10-21 (PEERSGPPEIRP). Positions 24–284 (INFEELIGTG…IISALDHVII (261 aa)) constitute a Protein kinase domain. Residues 30–38 (IGTGSFGKV) and K51 contribute to the ATP site. Catalysis depends on D147, which acts as the Proton acceptor. The 93-residue stretch at 396–488 (WFHGDLDTTE…KLDSQLGVPN (93 aa)) folds into the SH2 domain.

It belongs to the protein kinase superfamily. TKL Ser/Thr protein kinase family. SH2 domain-containing protein kinase subfamily.

The protein resides in the membrane. The catalysed reaction is L-seryl-[protein] + ATP = O-phospho-L-seryl-[protein] + ADP + H(+). The enzyme catalyses L-threonyl-[protein] + ATP = O-phospho-L-threonyl-[protein] + ADP + H(+). Functionally, required for proper chemotaxis and phagocytosis; proper spatiotemporal control of F-actin levels in chemotaxing cells. Negative regulator of the PI3K (phosphatidylinositol 3 kinase) pathway. Predominantly phosphorylates serines and threonines and tyrosines at a lower level. The protein is Dual specificity protein kinase shkC (shkC) of Dictyostelium discoideum (Social amoeba).